Consider the following 72-residue polypeptide: Translation initiation factor IF-1 (72 aa).

The region spanning 1–72 (MSKDDVIQMQ…SRARIVFRAK (72 aa)) is the S1-like domain.

It belongs to the IF-1 family. As to quaternary structure, component of the 30S ribosomal translation pre-initiation complex which assembles on the 30S ribosome in the order IF-2 and IF-3, IF-1 and N-formylmethionyl-tRNA(fMet); mRNA recruitment can occur at any time during PIC assembly.

The protein localises to the cytoplasm. One of the essential components for the initiation of protein synthesis. Stabilizes the binding of IF-2 and IF-3 on the 30S subunit to which N-formylmethionyl-tRNA(fMet) subsequently binds. Helps modulate mRNA selection, yielding the 30S pre-initiation complex (PIC). Upon addition of the 50S ribosomal subunit IF-1, IF-2 and IF-3 are released leaving the mature 70S translation initiation complex. The protein is Translation initiation factor IF-1 of Methylibium petroleiphilum (strain ATCC BAA-1232 / LMG 22953 / PM1).